A 103-amino-acid polypeptide reads, in one-letter code: Large ribosomal subunit protein eL14 (103 aa).

The protein belongs to the eukaryotic ribosomal protein eL14 family.

The chain is Large ribosomal subunit protein eL14 from Pyrobaculum aerophilum (strain ATCC 51768 / DSM 7523 / JCM 9630 / CIP 104966 / NBRC 100827 / IM2).